Consider the following 238-residue polypeptide: CD209 antigen-like protein A (238 aa).

Over 1–51 (MSDSKEMGKRQLRPLDEELLTSSHTRHSIKGFGFQTNSGFSSFTGCLVHSQ) the chain is Cytoplasmic. The helical; Signal-anchor for type II membrane protein transmembrane segment at 52–72 (VPLALQVLFLAVCSVLLVVIL) threads the bilayer. Over 73–238 (VKVYKIPSSQ…KKLSTSCPSK (166 aa)) the chain is Extracellular. A disulfide bridge links Cys108 with Cys119. Residues 115–229 (FQGSCYFFSV…CTNKKFWICK (115 aa)) form the C-type lectin domain. N-linked (GlcNAc...) asparagine glycosylation occurs at Asn130. Intrachain disulfides connect Cys136–Cys228 and Cys207–Cys220. Ca(2+) contacts are provided by Glu198, Asn200, Leu202, Glu205, Asn216, and Asp217. An N-linked (GlcNAc...) asparagine glycan is attached at Asn216.

As to expression, predominantly expressed in dendritic cells. Detected at very low levels in lung, spleen, lymph nodes and bone marrow.

The protein localises to the membrane. Probable pathogen-recognition receptor. May mediate the endocytosis of pathogens which are subsequently degraded in lysosomal compartments. May recognize in a calcium-dependent manner high mannose N-linked oligosaccharides in a variety of pathogen antigens. The polypeptide is CD209 antigen-like protein A (Cd209a) (Mus musculus (Mouse)).